We begin with the raw amino-acid sequence, 459 residues long: tRNA modification GTPase MnmE (459 aa).

Positions 25, 87, and 126 each coordinate (6S)-5-formyl-5,6,7,8-tetrahydrofolate. Residues 221-380 enclose the TrmE-type G domain; sequence GLKVAIVGRP…LETAILEIVQ (160 aa). N231 is a binding site for K(+). Residues 231–236, 250–256, and 275–278 contribute to the GTP site; these read NVGKSS, TDLPGTT, and DTAG. Mg(2+) is bound at residue S235. Positions 250, 252, and 255 each coordinate K(+). T256 lines the Mg(2+) pocket. (6S)-5-formyl-5,6,7,8-tetrahydrofolate is bound at residue K459.

It belongs to the TRAFAC class TrmE-Era-EngA-EngB-Septin-like GTPase superfamily. TrmE GTPase family. Homodimer. Heterotetramer of two MnmE and two MnmG subunits. The cofactor is K(+).

Its subcellular location is the cytoplasm. In terms of biological role, exhibits a very high intrinsic GTPase hydrolysis rate. Involved in the addition of a carboxymethylaminomethyl (cmnm) group at the wobble position (U34) of certain tRNAs, forming tRNA-cmnm(5)s(2)U34. This is tRNA modification GTPase MnmE from Nostoc sp. (strain PCC 7120 / SAG 25.82 / UTEX 2576).